The chain runs to 182 residues: tRNA-splicing endonuclease (182 aa).

Active-site residues include Y119, H127, and K158.

The protein belongs to the tRNA-intron endonuclease family. Archaeal short subfamily. Homotetramer; although the tetramer contains four active sites, only two participate in the cleavage. Therefore, it should be considered as a dimer of dimers.

It catalyses the reaction pretRNA = a 3'-half-tRNA molecule with a 5'-OH end + a 5'-half-tRNA molecule with a 2',3'-cyclic phosphate end + an intron with a 2',3'-cyclic phosphate and a 5'-hydroxyl terminus.. Functionally, endonuclease that removes tRNA introns. Cleaves pre-tRNA at the 5'- and 3'-splice sites to release the intron. The products are an intron and two tRNA half-molecules bearing 2',3' cyclic phosphate and 5'-OH termini. Recognizes a pseudosymmetric substrate in which 2 bulged loops of 3 bases are separated by a stem of 4 bp. The protein is tRNA-splicing endonuclease of Saccharolobus islandicus (strain M.14.25 / Kamchatka #1) (Sulfolobus islandicus).